The following is a 227-amino-acid chain: PKHD-type hydroxylase Patl_2273 (227 aa).

A Fe2OG dioxygenase domain is found at 78–178 (KIYPPKFNRY…RTASFFWIES (101 aa)). Fe cation is bound by residues H96, D98, and H159. 2-oxoglutarate is bound at residue R169.

Fe(2+) is required as a cofactor. The cofactor is L-ascorbate.

The protein is PKHD-type hydroxylase Patl_2273 of Pseudoalteromonas atlantica (strain T6c / ATCC BAA-1087).